Consider the following 25-residue polypeptide: Caerin 2.1 (25 aa).

As to expression, expressed by the skin dorsal glands.

Its subcellular location is the secreted. Antibacterial peptide with narrow spectrum of activity. Active against the Gram-negative bacterium P.multocida (MIC=25 ug/ml). Inhibits the formation of NO by neuronal nitric oxide synthase with an IC(50) of 9 ug/ml. The protein is Caerin 2.1 of Litoria peronii (Emerald spotted tree frog).